The chain runs to 302 residues: Probable WRKY transcription factor 40 (302 aa).

The WRKY DNA-binding region spans 140-206 (DTTLVVKDGY…YEGEHNHPMP (67 aa)).

It belongs to the WRKY group III family.

It is found in the nucleus. Its function is as follows. Transcription factor. Interacts specifically with the W box (5'-(T)TGAC[CT]-3'), a frequently occurring elicitor-responsive cis-acting element. This Arabidopsis thaliana (Mouse-ear cress) protein is Probable WRKY transcription factor 40.